The chain runs to 169 residues: uncharacterized protein (169 aa).

The 113-residue stretch at 18–130 (VVEHCLAVSE…VAHADNLIFG (113 aa)) folds into the HD domain.

This is an uncharacterized protein from Methanocaldococcus jannaschii (strain ATCC 43067 / DSM 2661 / JAL-1 / JCM 10045 / NBRC 100440) (Methanococcus jannaschii).